The chain runs to 337 residues: MTDPKKISRVALKGYDLTKVSRALEECEDQPGVRVGGVQIVSGGEAEAPAHLEDNRQGAIGDNFDVFSRDSKNVQIVTEHEDSSDEEYEEARSYGDDSGHQPNRAAVPFADDEYGDFKRARERLPQLFHEGWGFGSQQANEESSEGLQQQSGECGSGGGSSNAGGKDEDDLQEKTGHEKEKSVIVPPKESGSVSGYHGSCDIPFNMEEFLASPATTQRRQLLELCQLIADRSNEELIFFPWGFNLVKRKVHRVEPQQPVAVSHRFTWEDFQLKLKAGFTLIHKKTKAPVVLNSSSYNLGSVPEGGISLSPDDTELSVLIKCLRYLGLYKFLATQIEF.

2 disordered regions span residues 77–110 and 136–194; these read VTEH…VPFA and SQQA…GSVS. Basic and acidic residues-rich tracts occupy residues 90 to 99 and 172 to 182; these read EARSYGDDSG and QEKTGHEKEKS.

In terms of assembly, homotrimer. This trimer is stabilized by binding to the L protein. Binds N(0), and N in ribonucleocapsid. In terms of processing, phosphorylated by host kinases. Phosphorylation play an important role in facilitating trimerization and possibly P-L complex formation.

Its subcellular location is the virion. It is found in the host cytoplasm. Essential component of the RNA polymerase transcription and replication complex. Binds the viral ribonucleocapsid and positions the L polymerase on the template. May act as a chaperone for newly synthesized free N protein, so-called N(0). Plays a role in virion assembly. In Tupaia virus (isolate Tupaia/Thailand/-/1986) (TUPV), this protein is Phosphoprotein (P).